The chain runs to 215 residues: Protein-L-isoaspartate O-methyltransferase 1 (215 aa).

The active site involves serine 61.

The protein belongs to the methyltransferase superfamily. L-isoaspartyl/D-aspartyl protein methyltransferase family.

The protein resides in the cytoplasm. It catalyses the reaction [protein]-L-isoaspartate + S-adenosyl-L-methionine = [protein]-L-isoaspartate alpha-methyl ester + S-adenosyl-L-homocysteine. Functionally, catalyzes the methyl esterification of L-isoaspartyl residues in peptides and proteins that result from spontaneous decomposition of normal L-aspartyl and L-asparaginyl residues. It plays a role in the repair and/or degradation of damaged proteins. This chain is Protein-L-isoaspartate O-methyltransferase 1, found in Pelobacter propionicus (strain DSM 2379 / NBRC 103807 / OttBd1).